The primary structure comprises 35 residues: Putative gastric cancer-related gene 224 protein (35 aa).

Expressed in gastric mucosa.

The protein is Putative gastric cancer-related gene 224 protein (GCRG224) of Homo sapiens (Human).